The following is a 209-amino-acid chain: N-(5'-phosphoribosyl)anthranilate isomerase (209 aa).

This sequence belongs to the TrpF family.

It carries out the reaction N-(5-phospho-beta-D-ribosyl)anthranilate = 1-(2-carboxyphenylamino)-1-deoxy-D-ribulose 5-phosphate. It functions in the pathway amino-acid biosynthesis; L-tryptophan biosynthesis; L-tryptophan from chorismate: step 3/5. This is N-(5'-phosphoribosyl)anthranilate isomerase from Pelobacter propionicus (strain DSM 2379 / NBRC 103807 / OttBd1).